The sequence spans 255 residues: Accessory gland-specific peptide 26Aa (255 aa).

A signal peptide spans 1 to 18; sequence MNLILLCSQILLLLFTVA. Residues 86 to 110 are disordered; the sequence is PINNSKSRKNSSTLPSQILTDKPNQ. Residues 87–110 show a composition bias toward polar residues; that stretch reads INNSKSRKNSSTLPSQILTDKPNQ. N-linked (GlcNAc...) asparagine glycosylation is found at asparagine 88, asparagine 95, and asparagine 136. Disordered regions lie at residues 177 to 196 and 235 to 255; these read NAQN…SKDI and NNPA…PSTT. Residues 183 to 192 are compositionally biased toward basic residues; the sequence is KSTKSCKKRP. The segment covering 245–255 has biased composition (polar residues); sequence KSPSEGNPSTT.

In terms of processing, it undergoes several cleavages as it is secreted and it is further processed in the recipient female. In terms of tissue distribution, main cells of the accessory glands of males.

The protein resides in the secreted. It localises to the extracellular space. Functionally, this protein is transferred from male to female's hemolymph during mating, affecting egglaying and behavior after mating. This chain is Accessory gland-specific peptide 26Aa (Acp26Aa), found in Drosophila sechellia (Fruit fly).